The sequence spans 790 residues: Cadherin-18 (790 aa).

A signal peptide spans 1–24 (MKITSTSCICPVLVCLCFVQRCYG). Positions 25–53 (TTHHGSIRGTRNQTKHIEGETEVHHRPKR) are excised as a propeptide. A glycan (N-linked (GlcNAc...) asparagine) is linked at asparagine 36. 5 Cadherin domains span residues 54–159 (GWVW…APKF), 160–268 (TDGP…PPRF), 269–383 (PQKH…PPLF), 384–486 (SMPS…DNPP), and 487–608 (ELAR…FLSS). Residues 54-608 (GWVWNQFFVL…TCHAEAFLSS (555 aa)) lie on the Extracellular side of the membrane. Residue asparagine 255 is glycosylated (N-linked (GlcNAc...) asparagine). Residues asparagine 455 and asparagine 536 are each glycosylated (N-linked (GlcNAc...) asparagine). The helical transmembrane segment at 609–636 (AGLSTGALIAILLCVVILLAIVVLFITL) threads the bilayer. Over 637 to 790 (RRSKKEPLII…YGEIESERTT (154 aa)) the chain is Cytoplasmic. A Phosphoserine modification is found at serine 786.

It localises to the cell membrane. Cadherins are calcium-dependent cell adhesion proteins. They preferentially interact with themselves in a homophilic manner in connecting cells; cadherins may thus contribute to the sorting of heterogeneous cell types. The protein is Cadherin-18 (CDH18) of Bos taurus (Bovine).